The chain runs to 425 residues: Glucan 1,3-beta-glucosidase (425 aa).

Residues 1–17 form the signal peptide; sequence MLLTFAPIFLLISSIVA. The active-site Proton donor is the E214. 2 disulfides stabilise this stretch: C301–C423 and C326–C352. K328 serves as the catalytic Nucleophile.

It belongs to the glycosyl hydrolase 5 (cellulase A) family.

It localises to the secreted. The enzyme catalyses Successive hydrolysis of beta-D-glucose units from the non-reducing ends of (1-&gt;3)-beta-D-glucans, releasing alpha-glucose.. Functionally, beta-glucanases participate in the metabolism of beta-glucan, the main structural component of the cell wall. It could also function biosynthetically as a transglycosylase. The protein is Glucan 1,3-beta-glucosidase (EXG1) of Candida oleophila (Yeast).